The sequence spans 109 residues: Small ribosomal subunit protein uS10c (109 aa).

Belongs to the universal ribosomal protein uS10 family. Part of the 30S ribosomal subunit.

It localises to the plastid. The protein resides in the chloroplast. In terms of biological role, involved in the binding of tRNA to the ribosomes. This chain is Small ribosomal subunit protein uS10c, found in Cyanidium caldarium (Red alga).